Here is a 167-residue protein sequence, read N- to C-terminus: CGG triplet repeat-binding protein 1 (167 aa).

Residue S56 is modified to Phosphoserine. The tract at residues 65–86 (KTHTKRKAEFEEQNVRKKQRPL) is disordered. The Nuclear localization signal signature appears at 80–84 (RKKQR). At S164 the chain carries Phosphoserine.

It localises to the nucleus. Binds to nonmethylated 5'-d(CGG)(n)-3' trinucleotide repeats in the FMR1 promoter. May play a role in regulating FMR1 promoter. This is CGG triplet repeat-binding protein 1 (Cggbp1) from Mus musculus (Mouse).